We begin with the raw amino-acid sequence, 661 residues long: Bifunctional xylanase/xylan deacetylase (661 aa).

The first 27 residues, 1-27, serve as a signal peptide directing secretion; the sequence is MKLPTLGKCVVRTLMGAVALGAISVNA. Positions 29-226 constitute a GH11 domain; the sequence is TLSSNSTGTN…SRGSSDITVS (198 aa). Glu116 acts as the Nucleophile; for endoxylanase activity in catalysis. Glu213 serves as the catalytic Proton donor; for endoxylanase activity. Residues 220 to 259 are disordered; the sequence is SSDITVSEGTSGGGTSSVGGASSSVNSSTGGGSSGGITVR. Residues 237–247 show a composition bias toward low complexity; that stretch reads VGGASSSVNSS. A polysaccharide deacetylase region spans residues 394-577; the sequence is SNCSGYVGIT…AKGLCPGRID (184 aa). One can recognise a NodB homology domain in the interval 398–574; it reads GYVGITFDDG…NLRAKGLCPG (177 aa). Positions 578–610 are disordered; the sequence is PNTGRAVAPSSSGGSSSVALSSSSRSSSSAGGN. Over residues 581 to 608 the composition is skewed to low complexity; it reads GRAVAPSSSGGSSSVALSSSSRSSSSAG. Residues 616 to 645 enclose the CBM10 domain; that stretch reads QCNWWGTFYPLCQTQTSGWGWENSRSCIST.

In the N-terminal section; belongs to the glycosyl hydrolase 11 (cellulase G) family.

The protein localises to the secreted. The enzyme catalyses Endohydrolysis of (1-&gt;4)-beta-D-xylosidic linkages in xylans.. It catalyses the reaction Deacetylation of xylans and xylo-oligosaccharides.. It participates in glycan degradation; xylan degradation. Its function is as follows. Endo-acting xylanase which specifically cleaves internal linkages on the xylan backbone, releasing xylooligosaccharides. Is able to hydrolyze oat spelt xylan and the arabinoxylans from wheat and rye, releasing xylobiose as the major product. Also likely catalyzes, via its C-terminal domain, the removal of acetyl groups from acetylated xylan. Thus, has the capability of hydrolyzing acetylated xylan. Does not attack mannan, galactan, arabinan or any cellulosic substrates. The sequence is that of Bifunctional xylanase/xylan deacetylase (xyn11A) from Cellvibrio japonicus (Pseudomonas fluorescens subsp. cellulosa).